The chain runs to 498 residues: ATP synthase subunit beta, chloroplastic (498 aa).

172–179 (GGAGVGKT) serves as a coordination point for ATP.

Belongs to the ATPase alpha/beta chains family. In terms of assembly, F-type ATPases have 2 components, CF(1) - the catalytic core - and CF(0) - the membrane proton channel. CF(1) has five subunits: alpha(3), beta(3), gamma(1), delta(1), epsilon(1). CF(0) has four main subunits: a(1), b(1), b'(1) and c(9-12).

Its subcellular location is the plastid. It localises to the chloroplast thylakoid membrane. It catalyses the reaction ATP + H2O + 4 H(+)(in) = ADP + phosphate + 5 H(+)(out). Produces ATP from ADP in the presence of a proton gradient across the membrane. The catalytic sites are hosted primarily by the beta subunits. This chain is ATP synthase subunit beta, chloroplastic, found in Nicotiana tabacum (Common tobacco).